The sequence spans 671 residues: DNA ligase (671 aa).

Residues 32-36 (DAEYD), 81-82 (SL), and Glu-113 contribute to the NAD(+) site. The active-site N6-AMP-lysine intermediate is Lys-115. The NAD(+) site is built by Arg-136, Glu-173, Lys-290, and Lys-314. Zn(2+) contacts are provided by Cys-408, Cys-411, Cys-426, and Cys-432. The 79-residue stretch at 593–671 (EIDSPFAGKT…EAEMIRLLGA (79 aa)) folds into the BRCT domain.

This sequence belongs to the NAD-dependent DNA ligase family. LigA subfamily. Mg(2+) is required as a cofactor. Requires Mn(2+) as cofactor.

It carries out the reaction NAD(+) + (deoxyribonucleotide)n-3'-hydroxyl + 5'-phospho-(deoxyribonucleotide)m = (deoxyribonucleotide)n+m + AMP + beta-nicotinamide D-nucleotide.. Its function is as follows. DNA ligase that catalyzes the formation of phosphodiester linkages between 5'-phosphoryl and 3'-hydroxyl groups in double-stranded DNA using NAD as a coenzyme and as the energy source for the reaction. It is essential for DNA replication and repair of damaged DNA. The protein is DNA ligase of Salmonella newport (strain SL254).